An 83-amino-acid polypeptide reads, in one-letter code: Pigment-dispersing hormone peptides (83 aa).

The first 24 residues, 1–24 (MRFIILGVLFIAVASMILSNGVMA), serve as a signal peptide directing secretion. Position 80 is an alanine amide (A80).

The protein belongs to the arthropod PDH family. Strongly expressed in eyestalk tissue and cerebral ganglia (at protein level).

Its subcellular location is the secreted. Functionally, the pigment-dispersing hormone causes the migration of the distal retinal pigment into the proximal end of the pigment chromatophore cells and thus decreases the amount of light entering the retinulas. May also function as a neurotransmitter and/or neuromodulator. In Eurydice pulchra (Speckled sea louse), this protein is Pigment-dispersing hormone peptides.